The chain runs to 527 residues: Lysine--tRNA ligase (527 aa).

Positions 44–52 (PSGLPHIGT) match the 'HIGH' region motif. The 'KMSKS' region signature appears at 290 to 294 (KISKS). ATP is bound at residue lysine 293.

Belongs to the class-I aminoacyl-tRNA synthetase family.

The protein localises to the cytoplasm. The enzyme catalyses tRNA(Lys) + L-lysine + ATP = L-lysyl-tRNA(Lys) + AMP + diphosphate. This is Lysine--tRNA ligase from Roseobacter denitrificans (strain ATCC 33942 / OCh 114) (Erythrobacter sp. (strain OCh 114)).